A 741-amino-acid polypeptide reads, in one-letter code: G2 and S phase-expressed protein 1 (741 aa).

A Phosphoserine modification is found at Ser73. Disordered stretches follow at residues Glu101 to Val120, Glu131 to Ser428, and Phe450 to Arg512. The span at Ala106–Val120 shows a compositional bias: polar residues. Positions Glu131–Thr147 are enriched in basic and acidic residues. Phosphoserine occurs at positions 139, 153, 191, and 245. Polar residues predominate over residues Ser173–Gly209. The span at Ile246–Val261 shows a compositional bias: polar residues. The span at Ser310–Ser321 shows a compositional bias: low complexity. Ser311 bears the Phosphoserine mark. The segment covering Gln337–Ser355 has biased composition (polar residues). The span at Pro360–Ala372 shows a compositional bias: low complexity. Residues Ser398–Glu408 show a composition bias toward polar residues. Ser460 is modified (phosphoserine). At Thr465 the chain carries Phosphothreonine. Residues Ser476, Ser493, Ser509, and Ser514 each carry the phosphoserine modification. The span at Thr478–Pro497 shows a compositional bias: low complexity. The residue at position 518 (Thr518) is a Phosphothreonine. 4 positions are modified to phosphoserine: Ser521, Ser541, Ser582, and Ser599. The interval Leu550–Pro640 is disordered. A compositionally biased stretch (low complexity) spans Gln578–Pro593. Thr696 bears the Phosphothreonine mark. Phosphoserine is present on residues Ser720, Ser726, and Ser736.

In terms of processing, phosphorylated in mitosis.

Its subcellular location is the cytoplasm. The protein localises to the cytoskeleton. Functionally, may be involved in p53-induced cell cycle arrest in G2/M phase by interfering with microtubule rearrangements that are required to enter mitosis. Overexpression delays G2/M phase progression. The sequence is that of G2 and S phase-expressed protein 1 (Gtse1) from Mus musculus (Mouse).